Consider the following 151-residue polypeptide: Ribosome maturation factor RimP (151 aa).

This sequence belongs to the RimP family.

It localises to the cytoplasm. Its function is as follows. Required for maturation of 30S ribosomal subunits. The polypeptide is Ribosome maturation factor RimP (Vibrio parahaemolyticus serotype O3:K6 (strain RIMD 2210633)).